Consider the following 320-residue polypeptide: ATP-dependent 6-phosphofructokinase (320 aa).

An ATP-binding site is contributed by Gly12. ADP contacts are provided by residues 22–26 (RGVVR) and 55–60 (RYSVSD). ATP contacts are provided by residues 73–74 (RF) and 103–106 (GDGS). Position 104 (Asp104) interacts with Mg(2+). A substrate-binding site is contributed by 126 to 128 (TID). Asp128 functions as the Proton acceptor in the catalytic mechanism. Arg155 is a binding site for ADP. Substrate is bound by residues Arg163 and 170 to 172 (MGR). ADP-binding positions include 186-188 (GCE), Lys212, and 214-216 (KKH). Residues Glu223, Arg244, and 250–253 (HIQR) contribute to the substrate site.

This sequence belongs to the phosphofructokinase type A (PFKA) family. ATP-dependent PFK group I subfamily. Prokaryotic clade 'B1' sub-subfamily. Homotetramer. Mg(2+) serves as cofactor.

It is found in the cytoplasm. The catalysed reaction is beta-D-fructose 6-phosphate + ATP = beta-D-fructose 1,6-bisphosphate + ADP + H(+). It functions in the pathway carbohydrate degradation; glycolysis; D-glyceraldehyde 3-phosphate and glycerone phosphate from D-glucose: step 3/4. Its activity is regulated as follows. Allosterically activated by ADP and other diphosphonucleosides, and allosterically inhibited by phosphoenolpyruvate. Catalyzes the phosphorylation of D-fructose 6-phosphate to fructose 1,6-bisphosphate by ATP, the first committing step of glycolysis. The polypeptide is ATP-dependent 6-phosphofructokinase (Enterobacter cloacae).